A 399-amino-acid polypeptide reads, in one-letter code: C-type lectin domain family 4 member M (399 aa).

At 1–49 the chain is on the cytoplasmic side; it reads MSDSKEQRVQPLGLLEEDPTTSGIRLFPRDFQFQQTHGHKSSTGCLGHG. The Endocytosis signal motif lies at 14–15; the sequence is LL. Residues 50 to 70 form a helical; Signal-anchor for type II membrane protein membrane-spanning segment; that stretch reads PLVLQLLSFTLLAGVLVAILV. Residues 71 to 399 lie on the Extracellular side of the membrane; sequence QVYKVPSSLS…KKPTACFRDE (329 aa). Asn92 carries N-linked (GlcNAc...) asparagine glycosylation. 7 repeat units span residues 108 to 130, 131 to 153, 154 to 176, 177 to 199, 200 to 222, 223 to 245, and 246 to 268. A 7 X approximate tandem repeats region spans residues 108 to 269; that stretch reads KLQEIYQELI…AFERLCCRCP (162 aa). 4 disulfides stabilise this stretch: Cys265-Cys395, Cys268-Cys279, Cys296-Cys389, and Cys368-Cys381. The C-type lectin domain occupies 274–390; the sequence is FFQGNCYFIS…CNVDNYWICK (117 aa). Residues Glu359, Asn361, Ser363, Glu366, Asn377, and Asp378 each coordinate Ca(2+). N-linked (GlcNAc...) asparagine glycosylation occurs at Asn361.

Homotetramer.

It is found in the membrane. Probable pathogen-recognition receptor involved in peripheral immune surveillance in liver. May mediate the endocytosis of pathogens which are subsequently degraded in lysosomal compartments. Probably recognizes in a calcium-dependent manner high mannose N-linked oligosaccharides in a variety of pathogen antigens. Is a receptor for ICAM3, probably by binding to mannose-like carbohydrates. This Hylobates lar (Lar gibbon) protein is C-type lectin domain family 4 member M (CLEC4M).